Reading from the N-terminus, the 165-residue chain is Transcriptional repressor NrdR (165 aa).

The segment at 3–34 (CPFCGAQDTRVVDSRLSHEGDQVRRRRECGEC) is a zinc-finger region. The 91-residue stretch at 49-139 (PRVVKSDGSR…VYRRFEDVNQ (91 aa)) folds into the ATP-cone domain.

This sequence belongs to the NrdR family. The cofactor is Zn(2+).

In terms of biological role, negatively regulates transcription of bacterial ribonucleotide reductase nrd genes and operons by binding to NrdR-boxes. The protein is Transcriptional repressor NrdR of Methylococcus capsulatus (strain ATCC 33009 / NCIMB 11132 / Bath).